A 270-amino-acid chain; its full sequence is GTP cyclohydrolase FolE2 (270 aa).

Belongs to the GTP cyclohydrolase IV family.

It catalyses the reaction GTP + H2O = 7,8-dihydroneopterin 3'-triphosphate + formate + H(+). It participates in cofactor biosynthesis; 7,8-dihydroneopterin triphosphate biosynthesis; 7,8-dihydroneopterin triphosphate from GTP: step 1/1. Functionally, converts GTP to 7,8-dihydroneopterin triphosphate. In Cupriavidus pinatubonensis (strain JMP 134 / LMG 1197) (Cupriavidus necator (strain JMP 134)), this protein is GTP cyclohydrolase FolE2.